A 302-amino-acid polypeptide reads, in one-letter code: Dihydroorotate dehydrogenase B (NAD(+)), catalytic subunit (302 aa).

FMN-binding positions include Ser20 and 44–45 (KG). Substrate-binding positions include Lys44 and 68 to 72 (NSVGL). 2 residues coordinate FMN: Asn98 and Asn125. Asn125 provides a ligand contact to substrate. Residue Cys128 is the Nucleophile of the active site. 2 residues coordinate FMN: Lys163 and Ile189. 190–191 (NT) provides a ligand contact to substrate. FMN-binding positions include Gly215, 241–242 (GG), and 263–264 (GT).

The protein belongs to the dihydroorotate dehydrogenase family. Type 1 subfamily. Heterotetramer of 2 PyrK and 2 PyrD type B subunits. Requires FMN as cofactor.

The protein resides in the cytoplasm. It carries out the reaction (S)-dihydroorotate + NAD(+) = orotate + NADH + H(+). It functions in the pathway pyrimidine metabolism; UMP biosynthesis via de novo pathway; orotate from (S)-dihydroorotate (NAD(+) route): step 1/1. Functionally, catalyzes the conversion of dihydroorotate to orotate with NAD(+) as electron acceptor. The protein is Dihydroorotate dehydrogenase B (NAD(+)), catalytic subunit (pyrD) of Thermoanaerobacter pseudethanolicus (strain ATCC 33223 / 39E) (Clostridium thermohydrosulfuricum).